A 255-amino-acid chain; its full sequence is Homeobox protein Hox-D4 (255 aa).

Residues 31 to 127 (EQGADYYGGG…PKQPPSGTAL (97 aa)) are disordered. The span at 94 to 107 (EPCPAPPAPPPAPL) shows a compositional bias: pro residues. Residues 133-138 (VYPWMK) carry the Antp-type hexapeptide motif. A DNA-binding region (homeobox) is located at residues 154–213 (PKRSRTAYTRQQVLELEKEFHFNRYLTRRRRIEIAHTLCLSERQIKIWFQNRRMKWKKDH). The disordered stretch occupies residues 212 to 255 (DHKLPNTKGRSSSSSSSSSCSSSVAPSQHLQPMAKDHHTDLTTL). Over residues 222–234 (SSSSSSSSSCSSS) the composition is skewed to low complexity. Residues 245–255 (AKDHHTDLTTL) are compositionally biased toward basic and acidic residues.

It belongs to the Antp homeobox family. Deformed subfamily. Forms a DNA-binding heterodimer with transcription factor PBX1.

The protein localises to the nucleus. Functionally, sequence-specific transcription factor which is part of a developmental regulatory system that provides cells with specific positional identities on the anterior-posterior axis. This Homo sapiens (Human) protein is Homeobox protein Hox-D4 (HOXD4).